Consider the following 299-residue polypeptide: Apolipoprotein E (299 aa).

The signal sequence occupies residues 1–18 (MKVLCTVLVVTLLAGCRA). 7 repeat units span residues 74 to 95 (VLME…QELV), 96 to 117 (PMAE…ARLG), 118 to 139 (ADME…AMLG), 140 to 161 (QSAD…KRML), 162 to 183 (RDAE…EGAE), 184 to 205 (RGVS…VRAA), and 224 to 245 (GRLE…EQME). The tract at residues 74–245 (VLMEDTMKAV…RLEEMREQME (172 aa)) is 8 X 22 AA approximate tandem repeats. M137 bears the Methionine sulfoxide mark. A Phosphoserine modification is found at S141. The segment at 152-162 (HLRKLRKRMLR) is LDL and other lipoprotein receptors binding. Residue 156 to 159 (LRKR) coordinates heparin. Residues 204–273 (AALTGQPLQE…GWFEPMVEDM (70 aa)) form a lipid-binding and lipoprotein association region. 219–226 (GKQLRGRL) contacts heparin. The interval 261–273 (RLKGWFEPMVEDM) is specificity for association with VLDL.

Belongs to the apolipoprotein A1/A4/E family. Homotetramer. May interact with ABCA1; functionally associated with ABCA1 in the biogenesis of HDLs. May interact with APP/A4 amyloid-beta peptide; the interaction is extremely stable in vitro but its physiological significance is unclear. May interact with MAPT. May interact with MAP2. In the cerebrospinal fluid, interacts with secreted SORL1. Interacts with PMEL; this allows the loading of PMEL luminal fragment on ILVs to induce fibril nucleation. In terms of processing, APOE exists as multiple glycosylated and sialylated glycoforms within cells and in plasma. The extent of glycosylation and sialylation are tissue and context specific. Post-translationally, glycated in plasma VLDL. Phosphorylated by FAM20C in the extracellular medium.

The protein resides in the secreted. It localises to the extracellular space. The protein localises to the extracellular matrix. It is found in the extracellular vesicle. Its subcellular location is the endosome. The protein resides in the multivesicular body. Its function is as follows. APOE is an apolipoprotein, a protein associating with lipid particles, that mainly functions in lipoprotein-mediated lipid transport between organs via the plasma and interstitial fluids. APOE is a core component of plasma lipoproteins and is involved in their production, conversion and clearance. Apolipoproteins are amphipathic molecules that interact both with lipids of the lipoprotein particle core and the aqueous environment of the plasma. As such, APOE associates with chylomicrons, chylomicron remnants, very low density lipoproteins (VLDL) and intermediate density lipoproteins (IDL) but shows a preferential binding to high-density lipoproteins (HDL). It also binds a wide range of cellular receptors including the LDL receptor/LDLR, the LDL receptor-related proteins LRP1, LRP2 and LRP8 and the very low-density lipoprotein receptor/VLDLR that mediate the cellular uptake of the APOE-containing lipoprotein particles. Finally, APOE also has a heparin-binding activity and binds heparan-sulfate proteoglycans on the surface of cells, a property that supports the capture and the receptor-mediated uptake of APOE-containing lipoproteins by cells. A main function of APOE is to mediate lipoprotein clearance through the uptake of chylomicrons, VLDLs, and HDLs by hepatocytes. APOE is also involved in the biosynthesis by the liver of VLDLs as well as their uptake by peripheral tissues ensuring the delivery of triglycerides and energy storage in muscle, heart and adipose tissues. By participating in the lipoprotein-mediated distribution of lipids among tissues, APOE plays a critical role in plasma and tissues lipid homeostasis. APOE is also involved in two steps of reverse cholesterol transport, the HDLs-mediated transport of cholesterol from peripheral tissues to the liver, and thereby plays an important role in cholesterol homeostasis. First, it is functionally associated with ABCA1 in the biogenesis of HDLs in tissues. Second, it is enriched in circulating HDLs and mediates their uptake by hepatocytes. APOE also plays an important role in lipid transport in the central nervous system, regulating neuron survival and sprouting. In Octodon degus (Degu), this protein is Apolipoprotein E (APOE).